The sequence spans 264 residues: Tritrans,polycis-undecaprenyl-diphosphate synthase (geranylgeranyl-diphosphate specific) (264 aa).

Aspartate 43 is a catalytic residue. Residue aspartate 43 participates in Mg(2+) binding. Substrate-binding positions include 44–47 (GNRR), tryptophan 48, histidine 60, and 88–90 (STE). The active-site Proton acceptor is asparagine 91. Substrate contacts are provided by residues phenylalanine 92, arginine 94, arginine 213, and 219–221 (RIS). Glutamate 232 serves as a coordination point for Mg(2+).

The protein belongs to the UPP synthase family. In terms of assembly, homodimer. Mg(2+) serves as cofactor.

The catalysed reaction is geranylgeranyl diphosphate + 7 isopentenyl diphosphate = tri-trans,hepta-cis-undecaprenyl diphosphate + 7 diphosphate. Functionally, catalyzes the sequential condensation of isopentenyl diphosphate (IPP) with geranylgeranyl diphosphate (GGPP) to yield (2Z,6Z,10Z,14Z,18Z,22Z,26Z,30E,34E,38E)-undecaprenyl diphosphate (tritrans,heptacis-UPP). It is probably the precursor of glycosyl carrier lipids. The protein is Tritrans,polycis-undecaprenyl-diphosphate synthase (geranylgeranyl-diphosphate specific) of Pyrococcus abyssi (strain GE5 / Orsay).